The chain runs to 182 residues: Hypoxanthine/guanine phosphoribosyltransferase (182 aa).

This sequence belongs to the purine/pyrimidine phosphoribosyltransferase family. Archaeal HPRT subfamily. As to quaternary structure, homodimer.

It localises to the cytoplasm. It carries out the reaction IMP + diphosphate = hypoxanthine + 5-phospho-alpha-D-ribose 1-diphosphate. The enzyme catalyses GMP + diphosphate = guanine + 5-phospho-alpha-D-ribose 1-diphosphate. The protein operates within purine metabolism; IMP biosynthesis via salvage pathway; IMP from hypoxanthine: step 1/1. Catalyzes a salvage reaction resulting in the formation of IMP that is energically less costly than de novo synthesis. The chain is Hypoxanthine/guanine phosphoribosyltransferase from Methanosphaerula palustris (strain ATCC BAA-1556 / DSM 19958 / E1-9c).